The sequence spans 264 residues: Exosome complex component Rrp4 (264 aa).

One can recognise an S1 motif domain in the interval 65–137 (GDNVLGKIVD…EVNNIELTTK (73 aa)). Residues 147–206 (RGGQIIKITSSKVPRVIGKGGSMINMIKKLTQSRIIVGQNGWIWISSKNPELEKLAIEAI) enclose the KH domain. A compositionally biased stretch (acidic residues) spans 244-258 (SLEEETQEETVMEND). The tract at residues 244-264 (SLEEETQEETVMENDVEARGP) is disordered.

The protein belongs to the RRP4 family. Component of the archaeal exosome complex. Forms a trimer of Rrp4 and/or Csl4 subunits. The trimer associates with a hexameric ring-like arrangement composed of 3 Rrp41-Rrp42 heterodimers.

Its subcellular location is the cytoplasm. In terms of biological role, non-catalytic component of the exosome, which is a complex involved in RNA degradation. Increases the RNA binding and the efficiency of RNA degradation. Confers strong poly(A) specificity to the exosome. The protein is Exosome complex component Rrp4 of Pyrococcus furiosus (strain ATCC 43587 / DSM 3638 / JCM 8422 / Vc1).